The chain runs to 485 residues: MVISLSPNGSGRLNHQTTNLSNSLLTTLPYLPNSPLFGTDGIRGKAGELLTAPFALQLGFWAGQVLKSKTTTPGPVMIGQDSRNSSDMLAMAMAAGLTSAGLEVWQLGLCPTPCVAYLTRHSEAIAGIMISASHNPPEDNGIKFFNTDGTKLSSSLGQEIEDGLRGNLLLSVDEIAAWGKILYEPTLVNTYCQFLQDSLPPSLSCQGMKIVLDLAWGASVNVAPAMFKALGAEVICLHETANGDRINVNCGSTHLHVLQAAIQEHQADMGFAFDGDADRVMAVDSTGKVVDGDYILYLWGKSLLERGNLPNNLLIGTVMANLGFERAWQGLGGQLVRTSVGDRYVQSQMWETGAMLGGEQSGHIICHHYGVSGDGVQTALHLAALVHESGVSLAELVKNSFDTYPQILRNVRLEDREKLRYWQECQPLQQAIAQAEVGMGETGRVLVRASGTEPLIRVMVESECPDAANYWVNYLVGIVETHLAV.

Serine 133 functions as the Phosphoserine intermediate in the catalytic mechanism. Residues serine 133, aspartate 274, aspartate 276, and aspartate 278 each coordinate Mg(2+). The residue at position 133 (serine 133) is a Phosphoserine.

The protein belongs to the phosphohexose mutase family. The cofactor is Mg(2+). Activated by phosphorylation.

It catalyses the reaction alpha-D-glucosamine 1-phosphate = D-glucosamine 6-phosphate. Its function is as follows. Catalyzes the conversion of glucosamine-6-phosphate to glucosamine-1-phosphate. This is Phosphoglucosamine mutase from Crocosphaera subtropica (strain ATCC 51142 / BH68) (Cyanothece sp. (strain ATCC 51142)).